Consider the following 294-residue polypeptide: Protein PET54 (294 aa).

It is found in the mitochondrion inner membrane. Its function is as follows. Activator of specific mitochondrial mRNAs. PET54 is involved in the excision of intron aI5-beta from pre-mRNA for cytochrome c oxidase I (COX1) and plays a role in promoting the translation of COX3. In Saccharomyces bayanus (Yeast), this protein is Protein PET54 (PET54).